The chain runs to 123 residues: Late histone H2B.L1 (123 aa).

Residues methionine 1 to lysine 10 are compositionally biased toward low complexity. Residues methionine 1–glutamate 33 form a disordered region. Residues lysine 11–lysine 32 are compositionally biased toward basic residues. An O-linked (GlcNAc) serine glycan is attached at serine 110. Residue lysine 118 forms a Glycyl lysine isopeptide (Lys-Gly) (interchain with G-Cter in ubiquitin) linkage.

It belongs to the histone H2B family. The nucleosome is a histone octamer containing two molecules each of H2A, H2B, H3 and H4 assembled in one H3-H4 heterotetramer and two H2A-H2B heterodimers. The octamer wraps approximately 147 bp of DNA. Monoubiquitination of Lys-118 gives a specific tag for epigenetic transcriptional activation and is also prerequisite for histone H3 'Lys-4' and 'Lys-79' methylation. Post-translationally, glcNAcylation at Ser-110 promotes monoubiquitination of Lys-118. It fluctuates in response to extracellular glucose, and associates with transcribed genes.

Its subcellular location is the nucleus. The protein localises to the chromosome. Functionally, core component of nucleosome. Nucleosomes wrap and compact DNA into chromatin, limiting DNA accessibility to the cellular machineries which require DNA as a template. Histones thereby play a central role in transcription regulation, DNA repair, DNA replication and chromosomal stability. DNA accessibility is regulated via a complex set of post-translational modifications of histones, also called histone code, and nucleosome remodeling. In Strongylocentrotus purpuratus (Purple sea urchin), this protein is Late histone H2B.L1.